A 116-amino-acid chain; its full sequence is Distal membrane-arm assembly complex protein 1 (116 aa).

Residues 1 to 39 (MGSRLSQPFESYITAPPGTAAAPAKPAPPATPGAPTSPA) are disordered. Residues 14–24 (TAPPGTAAAPA) show a composition bias toward low complexity. A run of 2 helical transmembrane segments spans residues 52-69 (VLSG…YWVA) and 82-104 (WTIT…GIVV).

Interacts with incompletely assembled mitochondrial NADH:ubiquinone oxidoreductase complex (complex I).

Its subcellular location is the mitochondrion inner membrane. Its function is as follows. Required for the assembly of the mitochondrial NADH:ubiquinone oxidoreductase complex (complex I). Involved in the assembly of the distal region of complex I. The chain is Distal membrane-arm assembly complex protein 1 from Homo sapiens (Human).